Here is a 66-residue protein sequence, read N- to C-terminus: Clusterin (66 aa).

Belongs to the clusterin family. In terms of assembly, antiparallel disulfide-linked heterodimer of an alpha chain and a beta chain. Self-associates and forms higher oligomers. Interacts with a broad range of misfolded proteins, including APP, APOC2 and LYZ. Slightly acidic pH promotes interaction with misfolded proteins. Forms high-molecular weight oligomers upon interaction with misfolded proteins. Interacts with APOA1, LRP2, CLUAP1 and PON1. Interacts with the complement membrane attack complex. Interacts (via alpha chain) with XRCC6. Interacts with SYVN1, COMMD1, BTRC, CUL1 and with ubiquitin and SCF (SKP1-CUL1-F-box protein) E3 ubiquitin-protein ligase complexes. Interacts (via alpha chain) with BAX in stressed cells, where BAX undergoes a conformation change leading to association with the mitochondrial membrane. Does not interact with BAX in unstressed cells. Found in a complex with LTF, CLU, EPPIN and SEMG1. Interacts (immaturely glycosylated pre-secreted form) with HSPA5; this interaction promotes CLU stability and facilitates stress-induced CLU retrotranslocation from the secretory pathway to the mitochondria, thereby reducing stress-induced apoptosis by stabilizing mitochondrial membrane integrity. Interacts with BCL2L1; this interaction releases and activates BAX and promotes cell death. Interacts with TGFBR2 and ACVR1. Interacts (secreted form) with STMN3; this interaction may act as an important modulator during neuronal differentiation. Component of a epididymal complex at least composed of soluble form of prion protein PRNP, CLU, BPI, CES5A, MANBA and GLB1. In terms of processing, proteolytically cleaved on its way through the secretory system, probably within the Golgi lumen. Proteolytic cleavage is not necessary for its chaperone activity. All non-secreted forms are not proteolytically cleaved. Chaperone activity of uncleaved forms is dependent on a non-reducing environment. Polyubiquitinated, leading to proteasomal degradation. Under cellular stress, the intracellular level of cleaved form is reduced due to proteasomal degradation. Post-translationally, heavily N-glycosylated. About 30% of the protein mass is comprised of complex N-linked carbohydrate. Endoplasmic reticulum (ER) stress induces changes in glycosylation status and increases level of hypoglycosylated forms. Core carbohydrates are essential for chaperone activity. Non-secreted forms are hypoglycosylated or unglycosylated.

Its subcellular location is the secreted. The protein localises to the nucleus. It localises to the cytoplasm. It is found in the mitochondrion membrane. The protein resides in the cytosol. Its subcellular location is the microsome. The protein localises to the endoplasmic reticulum. It localises to the mitochondrion. It is found in the perinuclear region. The protein resides in the cytoplasmic vesicle. Its subcellular location is the secretory vesicle. The protein localises to the chromaffin granule. Functionally, functions as extracellular chaperone that prevents aggregation of non native proteins. Prevents stress-induced aggregation of blood plasma proteins. Inhibits formation of amyloid fibrils by APP, APOC2, B2M, CALCA, CSN3, SNCA and aggregation-prone LYZ variants (in vitro). Does not require ATP. Maintains partially unfolded proteins in a state appropriate for subsequent refolding by other chaperones, such as HSPA8/HSC70. Does not refold proteins by itself. Binding to cell surface receptors triggers internalization of the chaperone-client complex and subsequent lysosomal or proteasomal degradation. When secreted, protects cells against apoptosis and against cytolysis by complement: inhibits assembly of the complement membrane attack complex (MAC) by preventing polymerization of C9 pore component of the MAC complex. Intracellular forms interact with ubiquitin and SCF (SKP1-CUL1-F-box protein) E3 ubiquitin-protein ligase complexes and promote the ubiquitination and subsequent proteasomal degradation of target proteins. Promotes proteasomal degradation of COMMD1 and IKBKB. Modulates NF-kappa-B transcriptional activity. Following stress, promotes apoptosis. Inhibits apoptosis when associated with the mitochondrial membrane by interference with BAX-dependent release of cytochrome c into the cytoplasm. Plays a role in the regulation of cell proliferation. An intracellular form suppresses stress-induced apoptosis by stabilizing mitochondrial membrane integrity through interaction with HSPA5. Secreted form does not affect caspase or BAX-mediated intrinsic apoptosis and TNF-induced NF-kappa-B-activity. Secreted form act as an important modulator during neuronal differentiation through interaction with STMN3. Plays a role in the clearance of immune complexes that arise during cell injury. This Ovis aries (Sheep) protein is Clusterin (CLU).